The primary structure comprises 199 residues: Alkyl hydroperoxide reductase C (199 aa).

In terms of domain architecture, Thioredoxin spans 2 to 163 (VLVTYPAPDF…TLRMIDALHF (162 aa)). C50 (cysteine sulfenic acid (-SOH) intermediate) is an active-site residue.

Belongs to the peroxiredoxin family. AhpC/Prx1 subfamily. Homodimer; disulfide-linked, upon oxidation. 5 homodimers assemble to form a ring-like decamer.

Its subcellular location is the cytoplasm. It catalyses the reaction a hydroperoxide + NADH + H(+) = an alcohol + NAD(+) + H2O. Thiol-specific peroxidase that catalyzes the reduction of hydrogen peroxide and organic hydroperoxides to water and alcohols, respectively. Plays a role in cell protection against oxidative stress by detoxifying peroxides. The chain is Alkyl hydroperoxide reductase C from Buchnera aphidicola subsp. Baizongia pistaciae (strain Bp).